Reading from the N-terminus, the 238-residue chain is tRNA (guanine-N(7)-)-methyltransferase (238 aa).

The span at 1–12 shows a compositional bias: polar residues; the sequence is MTDTAENQTPND. The segment at 1–20 is disordered; sequence MTDTAENQTPNDRQAGHPRS. 4 residues coordinate S-adenosyl-L-methionine: Glu-70, Asp-95, Asp-122, and Asp-145. Asp-145 is an active-site residue. Substrate-binding positions include Lys-149, Asp-181, and 216 to 219; that span reads TKFE.

Belongs to the class I-like SAM-binding methyltransferase superfamily. TrmB family.

It carries out the reaction guanosine(46) in tRNA + S-adenosyl-L-methionine = N(7)-methylguanosine(46) in tRNA + S-adenosyl-L-homocysteine. The protein operates within tRNA modification; N(7)-methylguanine-tRNA biosynthesis. In terms of biological role, catalyzes the formation of N(7)-methylguanine at position 46 (m7G46) in tRNA. In Neisseria gonorrhoeae (strain NCCP11945), this protein is tRNA (guanine-N(7)-)-methyltransferase.